Reading from the N-terminus, the 231-residue chain is Ribose-5-phosphate isomerase A (231 aa).

Residues 40-43 (TGST), 93-96 (DGAD), and 106-109 (KGGG) contribute to the substrate site. Catalysis depends on Glu115, which acts as the Proton acceptor. Position 133 (Lys133) interacts with substrate.

It belongs to the ribose 5-phosphate isomerase family. As to quaternary structure, homodimer.

It catalyses the reaction aldehydo-D-ribose 5-phosphate = D-ribulose 5-phosphate. Its pathway is carbohydrate degradation; pentose phosphate pathway; D-ribose 5-phosphate from D-ribulose 5-phosphate (non-oxidative stage): step 1/1. Catalyzes the reversible conversion of ribose-5-phosphate to ribulose 5-phosphate. The protein is Ribose-5-phosphate isomerase A of Escherichia coli O6:K15:H31 (strain 536 / UPEC).